A 445-amino-acid chain; its full sequence is Glutamyl-tRNA(Gln) amidotransferase subunit D (445 aa).

The Asparaginase/glutaminase domain maps to 93-425; sequence SEIKIISTGG…EKIRSLMISN (333 aa). Catalysis depends on residues Thr-103, Thr-179, Asp-180, and Lys-258.

Belongs to the asparaginase 1 family. GatD subfamily. Heterodimer of GatD and GatE.

It carries out the reaction L-glutamyl-tRNA(Gln) + L-glutamine + ATP + H2O = L-glutaminyl-tRNA(Gln) + L-glutamate + ADP + phosphate + H(+). Allows the formation of correctly charged Gln-tRNA(Gln) through the transamidation of misacylated Glu-tRNA(Gln) in organisms which lack glutaminyl-tRNA synthetase. The reaction takes place in the presence of glutamine and ATP through an activated gamma-phospho-Glu-tRNA(Gln). The GatDE system is specific for glutamate and does not act on aspartate. In Saccharolobus islandicus (strain Y.N.15.51 / Yellowstone #2) (Sulfolobus islandicus), this protein is Glutamyl-tRNA(Gln) amidotransferase subunit D.